Here is a 116-residue protein sequence, read N- to C-terminus: UPF0482 protein ECA2253 (116 aa).

Residues 1 to 31 form the signal peptide; that stretch reads MNHYSFSSLIRALIPLSLVIVSAVWQPAALA.

This sequence belongs to the UPF0482 family.

This chain is UPF0482 protein ECA2253, found in Pectobacterium atrosepticum (strain SCRI 1043 / ATCC BAA-672) (Erwinia carotovora subsp. atroseptica).